The sequence spans 156 residues: Small ribosomal subunit protein uS7 (156 aa).

It belongs to the universal ribosomal protein uS7 family. Part of the 30S ribosomal subunit. Contacts proteins S9 and S11.

Functionally, one of the primary rRNA binding proteins, it binds directly to 16S rRNA where it nucleates assembly of the head domain of the 30S subunit. Is located at the subunit interface close to the decoding center, probably blocks exit of the E-site tRNA. The sequence is that of Small ribosomal subunit protein uS7 from Limosilactobacillus fermentum (strain NBRC 3956 / LMG 18251) (Lactobacillus fermentum).